The primary structure comprises 250 residues: Glutathione transferase omega-1 (250 aa).

Residues 21-101 (SKGSFRVYNM…YLDDAFPETR (81 aa)) form the GST N-terminal domain. The active-site Nucleophile is the Cys-33. Glutathione is bound by residues Lys-60 and 85–86 (ES). The GST C-terminal domain maps to 106–234 (DPYEKVQQKL…TQSLEHGAAF (129 aa)).

Belongs to the GST superfamily. Omega family. In terms of assembly, homodimer. Expressed in the intestinal cells.

The protein resides in the cytoplasm. It carries out the reaction RX + glutathione = an S-substituted glutathione + a halide anion + H(+). The enzyme catalyses L-dehydroascorbate + 2 glutathione = glutathione disulfide + L-ascorbate. The catalysed reaction is methylarsonate + 2 glutathione + H(+) = methylarsonous acid + glutathione disulfide + H2O. Exhibits glutathione-dependent thiol transferase activity. Has dehydroascorbate reductase activity and may contribute to the recycling of ascorbic acid. Participates in the biotransformation of inorganic arsenic and reduces monomethylarsonic acid (MMA). Protects against environmental stress and oxidative stress. This is Glutathione transferase omega-1 (gsto-1) from Caenorhabditis elegans.